The sequence spans 298 residues: MSRISILAVAAALVASATAASVTTTLSPYDERVNLIELAVYVSDIGAHLSEYYAFQALHKTETYPPEIAKAVFAGGDFTTMLTGISGDEVTRMITGVPWYSTRLMGAISEALANEGIATAVPASTTEASSTSTSEASSAATESSSSSESSAETSSNAASTQATVSSESSSAASTIASSAESSVASSVASSVASSASFANTTAPVSSTSSISVTPVVQNGTDSTVTKTQASTVETTITSCSNNVCSTVTKPVSSKAQSTATSVTSSASRVIDVTTNGANKFNNGVFGAAAIAGAAALLL.

The signal sequence occupies residues 1–19 (MSRISILAVAAALVASATA). The disordered stretch occupies residues 122–168 (PASTTEASSTSTSEASSAATESSSSSESSAETSSNAASTQATVSSES). A lipid anchor (GPI-anchor amidated asparagine) is attached at asparagine 275. Positions 276 to 298 (GANKFNNGVFGAAAIAGAAALLL) are cleaved as a propeptide — removed in mature form.

Belongs to the SRP1/TIP1 family. Post-translationally, extensively O-glycosylated. The GPI-anchor is attached to the protein in the endoplasmic reticulum and serves to target the protein to the cell surface. There, the glucosamine-inositol phospholipid moiety is cleaved off and the GPI-modified mannoprotein is covalently attached via its lipidless GPI glycan remnant to the 1,6-beta-glucan of the outer cell wall layer.

Its subcellular location is the secreted. The protein resides in the cell wall. It localises to the membrane. Its function is as follows. Component of the cell wall. The sequence is that of Cell wall protein DAN1 (DAN1) from Saccharomyces cerevisiae (strain ATCC 204508 / S288c) (Baker's yeast).